Reading from the N-terminus, the 183-residue chain is Ribosome maturation factor RimP (183 aa).

This sequence belongs to the RimP family.

It localises to the cytoplasm. Functionally, required for maturation of 30S ribosomal subunits. This chain is Ribosome maturation factor RimP, found in Mycobacterium bovis (strain ATCC BAA-935 / AF2122/97).